The following is a 466-amino-acid chain: Vimentin (466 aa).

The segment covering Met1–Arg13 has biased composition (low complexity). Residues Met1–Val31 are disordered. Ser2 is subject to N-acetylserine. Residues Ser2–Glu95 form a head region. Ser5 carries the phosphoserine modification. At Ser7 the chain carries Phosphoserine; by PKA and PKC; alternate. An O-linked (GlcNAc) serine; alternate glycan is attached at Ser7. Ser8 carries the phosphoserine modification. A phosphoserine; by PKC mark is found at Ser9 and Ser10. Thr20 carries the phosphothreonine modification. Ser25 bears the Phosphoserine; by PKA and PKC mark. Position 26 is a phosphoserine; by PKC (Ser26). An O-linked (GlcNAc) threonine glycan is attached at Thr33. Residue Ser34 is glycosylated (O-linked (GlcNAc) serine; alternate). Position 34 is a phosphoserine; by PKC; alternate (Ser34). Ser39 is modified (phosphoserine; by CaMK2, PKA, PKC and ROCK2). At Ser42 the chain carries Phosphoserine; by PKC. Ser49 carries the phosphoserine modification. Residue Tyr53 is modified to Phosphotyrosine. A Phosphoserine modification is found at Ser55. Residue Ser56 is modified to Phosphoserine; by CDK5 and CDK1. The residue at position 61 (Tyr61) is a Phosphotyrosine. Residue Ser66 is modified to Phosphoserine; by PKA and PKC. A Phosphoserine; by AURKB and ROCK2 modification is found at Ser72. Position 83 is a phosphoserine; by CaMK2 (Ser83). Ser87 carries the phosphoserine modification. A coil 1A region spans residues Phe96 to Leu131. Residues Phe96–Leu131 are a coiled coil. The IF rod domain maps to Glu103–Ile411. Lys104 is covalently cross-linked (Glycyl lysine isopeptide (Lys-Gly) (interchain with G-Cter in SUMO2)). Tyr117 carries the post-translational modification Phosphotyrosine. N6-acetyllysine; alternate is present on residues Lys120, Lys129, and Lys139. Residues Lys120 and Lys129 each carry the N6-succinyllysine; alternate modification. Glycyl lysine isopeptide (Lys-Gly) (interchain with G-Cter in SUMO2); alternate cross-links involve residues Lys120, Lys129, and Lys139. The interval Leu132–Glu153 is linker 1. A Phosphoserine modification is found at Ser144. The stretch at Met154–Leu245 forms a coiled coil. Residues Met154–Leu245 are coil 1B. Lys168 carries the post-translational modification N6-acetyllysine. Position 188 is an N6-acetyllysine; alternate (Lys188). At Lys188 the chain carries N6-succinyllysine; alternate. Phosphoserine is present on Ser214. The residue at position 223 (Lys223) is an N6-acetyllysine; alternate. A Glycyl lysine isopeptide (Lys-Gly) (interchain with G-Cter in SUMO2); alternate cross-link involves residue Lys223. Phosphoserine is present on Ser226. N6-acetyllysine is present on Lys235. Positions Gln246 to Ala268 are linker 12. A Glycyl lysine isopeptide (Lys-Gly) (interchain with G-Cter in SUMO2) cross-link involves residue Lys262. A coil 2 region spans residues Leu269 to Glu407. At Lys294 the chain carries N6-acetyllysine; alternate. Lys294 carries the post-translational modification N6-succinyllysine; alternate. Lys294 participates in a covalent cross-link: Glycyl lysine isopeptide (Lys-Gly) (interchain with G-Cter in SUMO2); alternate. Ser299 bears the Phosphoserine mark. Positions Asn303–Glu407 form a coiled coil. Lys313 participates in a covalent cross-link: Glycyl lysine isopeptide (Lys-Gly) (interchain with G-Cter in SUMO2). The short motif at Leu326–Glu329 is the [IL]-x-C-x-x-[DE] motif element. Lys373 carries the post-translational modification N6-acetyllysine; alternate. Residue Lys373 forms a Glycyl lysine isopeptide (Lys-Gly) (interchain with G-Cter in SUMO2); alternate linkage. The segment at Glu408–Glu466 is tail. Ser409, Ser412, Ser419, and Ser420 each carry phosphoserine. The residue at position 426 (Thr426) is a Phosphothreonine. Position 430 is a phosphoserine (Ser430). Thr436 carries the post-translational modification Phosphothreonine. A Phosphoserine modification is found at Ser438. Lys439 participates in a covalent cross-link: Glycyl lysine isopeptide (Lys-Gly) (interchain with G-Cter in SUMO2). Lys445 is modified (N6-acetyllysine; alternate). At Lys445 the chain carries N6-succinyllysine; alternate. Lys445 is covalently cross-linked (Glycyl lysine isopeptide (Lys-Gly) (interchain with G-Cter in SUMO2); alternate). Lys445 is covalently cross-linked (Glycyl lysine isopeptide (Lys-Gly) (interchain with G-Cter in SUMO1); alternate). Thr446 and Thr458 each carry phosphothreonine. The residue at position 459 (Ser459) is a Phosphoserine.

It belongs to the intermediate filament family. Homomer assembled from elementary dimers. Identified in complexes that contain VIM, EZR, AHNAK, BFSP1, BFSP2, ANK2, PLEC, PRX and spectrin. Interacts with BCAS3. Interacts with LGSN. Interacts with SYNM. Interacts (via rod region) with PLEC (via CH 1 domain). Interacts with STK33. Interacts with LARP6. Interacts with RAB8B. Interacts with TOR1A; the interaction associates TOR1A with the cytoskeleton. Interacts with TOR1AIP1. Interacts with TOR1AIP1. Interacts with DIAPH1. Interacts with EPPK1; interaction is dependent of higher-order structure of intermediate filament. Interacts with the non-receptor tyrosine kinase SRMS; the interaction leads to phosphorylation of VIM. Interacts with NOD2. Interacts (via head region) with CORO1C. Interacts with HDGF. Interacts with PRKCE (via phorbol-ester/DAG-type 2 domain). Interacts with BFSP2. Interacts with PPL. Interacts with PKP1 and PKP2. Interacts with SCRIB (via PDZ domains); the interaction protects SCRIB from proteasomal degradation and facilitates SCRIB localization to intermediate filaments, the interaction is reduced by cell contact inhibition. Post-translationally, one of the most prominent phosphoproteins in various cells of mesenchymal origin. Phosphorylation is enhanced during cell division, at which time vimentin filaments are significantly reorganized. Phosphorylation by PKN1 inhibits the formation of filaments. Filament disassembly during mitosis is promoted by phosphorylation at Ser-55 as well as by nestin. Phosphorylated at Ser-56 by CDK5 during neutrophil secretion in the cytoplasm. Phosphorylated by STK33. Phosphorylated on tyrosine residues by SRMS. In terms of processing, S-nitrosylation is induced by interferon-gamma and oxidatively-modified low-densitity lipoprotein (LDL(ox)) possibly implicating the iNOS-S100A8/9 transnitrosylase complex.

It is found in the cytoplasm. It localises to the cytoskeleton. The protein localises to the nucleus matrix. Its subcellular location is the cell membrane. Its function is as follows. Vimentins are class-III intermediate filaments found in various non-epithelial cells, especially mesenchymal cells. Vimentin is attached to the nucleus, endoplasmic reticulum, and mitochondria, either laterally or terminally. Plays a role in cell directional movement, orientation, cell sheet organization and Golgi complex polarization at the cell migration front. Protects SCRIB from proteasomal degradation and facilitates its localization to intermediate filaments in a cell contact-mediated manner. Functionally, involved with LARP6 in the stabilization of type I collagen mRNAs for CO1A1 and CO1A2. The protein is Vimentin (VIM) of Bos taurus (Bovine).